A 398-amino-acid chain; its full sequence is Na(+)/H(+) antiporter NhaA 2 (398 aa).

11 consecutive transmembrane segments (helical) span residues 17-37 (ILLMLAVAMAMLLANSPLAGL), 59-79 (LLLWVNDGLMALFFLLIGLEV), 95-115 (SLPTFAAIGGMVFPALVYLGF), 125-145 (GWAIPAATDIAFALGVLALLG), 154-174 (VFLLALAIIDDIGVIVIIALF), 179-199 (LSITSLVIAAIAIGSMVILNL), 213-233 (LLLWIAVLKSGVHATLAGVVI), 262-282 (FMILPLFAFANAGLSLSGMSL), 288-308 (PAALGVMLGLLLGKPLGVLLF), 331-351 (AVAVLCGVGFTMSIFISSLAF), and 364-384 (LGTLVGSMLSASIAYFWLTKV).

Belongs to the NhaA Na(+)/H(+) (TC 2.A.33) antiporter family.

The protein localises to the cell inner membrane. It catalyses the reaction Na(+)(in) + 2 H(+)(out) = Na(+)(out) + 2 H(+)(in). Na(+)/H(+) antiporter that extrudes sodium in exchange for external protons. This chain is Na(+)/H(+) antiporter NhaA 2, found in Shewanella denitrificans (strain OS217 / ATCC BAA-1090 / DSM 15013).